We begin with the raw amino-acid sequence, 325 residues long: Aldo-keto reductase family 1 member A1 (325 aa).

Thr-2 carries the post-translational modification N-acetylthreonine. Position 4 is a phosphoserine (Ser-4). NADP(+) is bound by residues 11-20, Thr-21, and Trp-22; that span reads GQKMPLIGLG. Residue Lys-23 is glycosylated (N-linked (Glc) (glycation) lysine). Ser-38 carries the phosphoserine modification. Residue Asp-45 coordinates NADP(+). The active-site Proton donor is the Tyr-50. Lys-68 and Lys-85 each carry an N-linked (Glc) (glycation) lysine glycan. Position 127 is an N6-acetyllysine; alternate (Lys-127). Lys-127 bears the N6-succinyllysine; alternate mark. Residue Lys-141 is glycosylated (N-linked (Glc) (glycation) lysine). Lys-145 carries the N6-succinyllysine modification. The N-linked (Glc) (glycation) lysine glycan is linked to Lys-153. Ser-162, Asn-163, Ser-211, Leu-213, Ser-215, Ser-216, Lys-263, Ser-264, Ile-265, Thr-266, Arg-269, Gln-272, and Asn-273 together coordinate NADP(+). Phosphoserine is present on Ser-211.

The protein belongs to the aldo/keto reductase family. As to quaternary structure, monomer. In terms of tissue distribution, widely expressed.

It is found in the cytoplasm. Its subcellular location is the cytosol. The protein resides in the apical cell membrane. The enzyme catalyses a primary alcohol + NADP(+) = an aldehyde + NADPH + H(+). It catalyses the reaction L-gulonate + NADP(+) = aldehydo-D-glucuronate + NADPH + H(+). It carries out the reaction L-gulono-1,4-lactone + NADP(+) = D-glucurono-3,6-lactone + NADPH + H(+). The catalysed reaction is allyl alcohol + NADP(+) = acrolein + NADPH + H(+). The enzyme catalyses glycerol + NADP(+) = D-glyceraldehyde + NADPH + H(+). It catalyses the reaction glycerol + NADP(+) = L-glyceraldehyde + NADPH + H(+). It carries out the reaction hydroxyacetone + NADP(+) = methylglyoxal + NADPH + H(+). The catalysed reaction is 3-deoxyfructose + NADP(+) = 3-deoxyglucosone + NADPH + H(+). The enzyme catalyses (R)-mevalonate + NADP(+) = (R)-mevaldate + NADPH + H(+). It catalyses the reaction pyridine 3-methanol + NADP(+) = pyridine-3-carbaldehyde + NADPH + H(+). It carries out the reaction S-nitroso-CoA + NADPH + H(+) = sulfinamide-CoA + NADP(+). The catalysed reaction is S-nitrosoglutathione + NADPH + H(+) = S-(hydroxysulfenamide)glutathione + NADP(+). Functionally, catalyzes the NADPH-dependent reduction of a wide variety of carbonyl-containing compounds to their corresponding alcohols. Displays enzymatic activity towards endogenous metabolites such as aromatic and aliphatic aldehydes, ketones, monosaccharides and bile acids. Plays an important role in ascorbic acid biosynthesis by catalyzing the reduction of D-glucuronic acid and D-glucurono-gamma-lactone. Functions as a detoxifiying enzyme by reducing a range of toxic aldehydes. Reduces methylglyoxal and 3-deoxyglucosone, which are present at elevated levels under hyperglycemic conditions and are cytotoxic. Involved also in the detoxification of lipid-derived aldehydes like acrolein. Plays a role in the activation of procarcinogens, such as polycyclic aromatic hydrocarbon trans-dihydrodiols, and in the metabolism of various xenobiotics and drugs. Also acts as an inhibitor of protein S-nitrosylation by mediating degradation of S-nitroso-coenzyme A (S-nitroso-CoA), a cofactor required to S-nitrosylate proteins. S-nitroso-CoA reductase activity is involved in reprogramming intermediary metabolism in renal proximal tubules, notably by inhibiting protein S-nitrosylation of isoform 2 of PKM (PKM2). Also acts as a S-nitroso-glutathione reductase by catalyzing the NADPH-dependent reduction of S-nitrosoglutathione. Displays no reductase activity towards retinoids. The protein is Aldo-keto reductase family 1 member A1 (Akr1a1) of Rattus norvegicus (Rat).